A 397-amino-acid polypeptide reads, in one-letter code: MKKLLKSVLVFAALSSASSLQALPVGNPAEPSLMIDGILWEGFGGDPCDPCTTWCDAISMRVGYYGDFVFDRVLKTDVNKEFQMGAAPTTSDVAGLQNDPTINVARPNPAYGKHMQDAEMFTNAAYMALNIWDRFDVFCTLGATTGYLKGNSASFNLVGLFGTKTQSSSFNTAKLIPNTALNEAVVELYINTTFAWSVGARAALWECGCATLGASFQYAQSKPKVEELNVLCNASEFTINKPKGYVGAEFPLNITAGTEAATGTKDASIDYHEWQASLALSYRLNMFTPYIGVKWSRVSFDADTIRIAQPKLAEAILDVTTLNRTTAGKGSVVSAGTDNELADTMQIVSLQLNKMKSRKSCGIAVGTTIVDADKYAVTVEARLIDERAAHVNAQFRF.

Positions 1 to 22 (MKKLLKSVLVFAALSSASSLQA) are cleaved as a signal peptide.

This sequence belongs to the chlamydial porin (CP) (TC 1.B.2) family. As to quaternary structure, part of a disulfide cross-linked outer membrane complex (COMC) composed of the major outer membrane porin (MOMP), the small cysteine-rich protein (OmcA) and the large cysteine-rich periplasmic protein (OmcB).

The protein resides in the cell outer membrane. In elementary bodies (EBs, the infectious stage, which is able to survive outside the host cell) provides the structural integrity of the outer envelope through disulfide cross-links with the small cysteine-rich protein and the large cysteine-rich periplasmic protein. It has been described in publications as the Sarkosyl-insoluble COMC (Chlamydia outer membrane complex), and serves as the functional equivalent of peptidoglycan. In terms of biological role, permits diffusion of specific solutes through the outer membrane. This Chlamydia trachomatis protein is Major outer membrane porin, serovar C (ompA).